A 37-amino-acid polypeptide reads, in one-letter code: Cytochrome b6-f complex subunit 5 (37 aa).

The chain crosses the membrane as a helical span at residues 5-25 (ILLGIVLGMVVVTLAGLFVAA).

It belongs to the PetG family. In terms of assembly, the 4 large subunits of the cytochrome b6-f complex are cytochrome b6, subunit IV (17 kDa polypeptide, PetD), cytochrome f and the Rieske protein, while the 4 small subunits are PetG, PetL, PetM and PetN. The complex functions as a dimer.

It localises to the cellular thylakoid membrane. In terms of biological role, component of the cytochrome b6-f complex, which mediates electron transfer between photosystem II (PSII) and photosystem I (PSI), cyclic electron flow around PSI, and state transitions. PetG is required for either the stability or assembly of the cytochrome b6-f complex. The polypeptide is Cytochrome b6-f complex subunit 5 (Synechococcus sp. (strain JA-2-3B'a(2-13)) (Cyanobacteria bacterium Yellowstone B-Prime)).